The following is a 474-amino-acid chain: 3-isopropylmalate dehydratase large subunit (474 aa).

[4Fe-4S] cluster-binding residues include C353, C414, and C417.

Belongs to the aconitase/IPM isomerase family. LeuC type 1 subfamily. Heterodimer of LeuC and LeuD. The cofactor is [4Fe-4S] cluster.

The enzyme catalyses (2R,3S)-3-isopropylmalate = (2S)-2-isopropylmalate. Its pathway is amino-acid biosynthesis; L-leucine biosynthesis; L-leucine from 3-methyl-2-oxobutanoate: step 2/4. Catalyzes the isomerization between 2-isopropylmalate and 3-isopropylmalate, via the formation of 2-isopropylmaleate. The chain is 3-isopropylmalate dehydratase large subunit from Xylella fastidiosa (strain M23).